A 337-amino-acid polypeptide reads, in one-letter code: MANSC domain-containing protein 4 (337 aa).

The first 18 residues, 1-18, serve as a signal peptide directing secretion; the sequence is MRAVELLLLLGLASMVHG. Over 19 to 278 the chain is Extracellular; sequence LCSPTVFYRD…SSENEEPWDG (260 aa). The region spanning 33-113 is the MANSC domain; sequence RFPGMLLDLE…LEPGASAILY (81 aa). N-linked (GlcNAc...) asparagine glycans are attached at residues asparagine 114, asparagine 227, and asparagine 251. Composition is skewed to polar residues over residues 216–230 and 239–260; these read SPST…NKTI and TRVS…VNKT. Residues 216–277 form a disordered region; the sequence is SPSTDFTHSP…HSSENEEPWD (62 aa). Residues 279–299 form a helical membrane-spanning segment; sequence APASAGVWLACVTLGAAVISL. The Cytoplasmic portion of the chain corresponds to 300–337; the sequence is CCRVVLGTSRCCGKRQGWSHMGQRSASGCRRNTLKENS. Residues 314–337 form a disordered region; sequence RQGWSHMGQRSASGCRRNTLKENS.

Its subcellular location is the membrane. The chain is MANSC domain-containing protein 4 (Mansc4) from Mus musculus (Mouse).